A 293-amino-acid polypeptide reads, in one-letter code: Insulin-like growth factor-binding protein 3 (293 aa).

The signal sequence occupies residues 1-27 (MQRARPALWAAALIALALLRGPPAARA). One can recognise an IGFBP N-terminal domain in the interval 36–119 (PVVRCEPCDA…LDGRGICANA (84 aa)). 6 disulfides stabilise this stretch: Cys-40–Cys-69, Cys-43–Cys-71, Cys-51–Cys-72, Cys-60–Cys-75, Cys-83–Cys-96, and Cys-90–Cys-116. 2 N-linked (GlcNAc...) asparagine glycosylation sites follow: Asn-118 and Asn-138. 2 disordered regions span residues 132–166 (APPAPGNGSESEEDRSVDSMENQALPSTHRVPDSK) and 178–213 (KKGHAKDSQRYKVDYESQSTDTQNFSSESKRETEYG). Ser-150 bears the Phosphoserine mark. Over residues 178–192 (KKGHAKDSQRYKVDY) the composition is skewed to basic and acidic residues. Polar residues predominate over residues 193–204 (ESQSTDTQNFSS). Residue Asn-201 is glycosylated (N-linked (GlcNAc...) asparagine). Residue Ser-203 is modified to Phosphoserine. A Thyroglobulin type-1 domain is found at 212–287 (YGPCRREMED…DVKGKGDVHC (76 aa)). 3 disulfides stabilise this stretch: Cys-215/Cys-242, Cys-253/Cys-264, and Cys-266/Cys-287.

As to quaternary structure, interacts with XLKD1. Binds IGF2 more than IGF1. Forms a ternary complex of about 140 to 150 kDa with IGF1 or IGF2 and a 85 kDa glycoprotein (ALS). Interacts with humanin; humanin competes with importin KPNB1 for binding to IGFBP3, blocking IGFBP3 nuclear import and IGFBP3-mediated apoptosis. Interacts with TMEM219. Interacts with RXRA; this interaction modulates the transcriptional activity of RXRA. Interacts with LRP1; this interaction mediates cell growth inhibition independent of IGF1. Phosphorylated by FAM20C in the extracellular medium. Phosphorylated by CK2; resulting in decreased nuclear localization.

It localises to the secreted. It is found in the nucleus. In terms of biological role, multifunctional protein that plays a critical role in regulating the availability of IGFs such as IGF1 and IGF2 to their receptors and thereby regulates IGF-mediated cellular processes including proliferation, differentiation, and apoptosis in a cell-type specific manner. Also exhibits IGF-independent antiproliferative and apoptotic effects mediated by its receptor TMEM219/IGFBP-3R. Inhibits the positive effect of humanin on insulin sensitivity. Promotes testicular germ cell apoptosis. Acts via LRP-1/alpha2M receptor, also known as TGF-beta type V receptor, to mediate cell growth inhibition independent of IGF1. Mechanistically, induces serine-specific dephosphorylation of IRS1 or IRS2 upon ligation to its receptor, leading to the inhibitory cascade. In the nucleus, interacts with transcription factors such as retinoid X receptor-alpha/RXRA to regulate transcriptional signaling and apoptosis. The chain is Insulin-like growth factor-binding protein 3 (IGFBP3) from Sus scrofa (Pig).